A 333-amino-acid chain; its full sequence is Mitochondrial glycine transporter (333 aa).

Solcar repeat units follow at residues 10 to 93, 125 to 209, and 235 to 319; these read SKST…IRQS, LSNT…GKKR, and HAAS…LIRR. 2 helical membrane-spanning segments follow: residues 16 to 41 and 68 to 94; these read FAAG…TRVQ and GAVP…RQSA. Residues 98–126 are disordered; the sequence is SPLPSSSSSTTTSSSTTTSSSSSSLPKLS. A run of 4 helical transmembrane segments spans residues 131-156, 184-207, 239-265, and 294-312; these read LLAG…VRYE, GYGA…EQGK, INFA…KTRI, and GLAL…AWTV.

It belongs to the mitochondrial carrier (TC 2.A.29) family. SLC25A38 subfamily.

It localises to the mitochondrion inner membrane. The enzyme catalyses glycine(in) = glycine(out). Its function is as follows. Mitochondrial glycine transporter that imports glycine into the mitochondrial matrix. Plays an important role in providing glycine for the first enzymatic step in heme biosynthesis, the condensation of glycine with succinyl-CoA to produce 5-aminolevulinate (ALA) in the mitochondrial matrix. The polypeptide is Mitochondrial glycine transporter (Chaetomium globosum (strain ATCC 6205 / CBS 148.51 / DSM 1962 / NBRC 6347 / NRRL 1970) (Soil fungus)).